Reading from the N-terminus, the 343-residue chain is MSAFTPASEVLLRHSDDFEQSRILFAGDLQDDLPARLDTAASRAHTQQFHHWQVLSRQMGDNARFSLVATANDVADCDTLIYYWPKNKPEAQFQLMNLLSLLPVGTDIFVVGENRSGVRIAEQMLADYAPLNKVDSARRCGLYFGRLEKQPVFDANKFWGEYSVDGLTVKTLPGVFSRDGLDVGSQLLLSTLTPHTKGKVLDVGCGAGVLSVAFARHSPKIRLTLCDVSAPAVEASRATLATNGVEGEVFASNVFSEVKGRFDMIISNPPFHDGMQTSLDAAQTLIRGAVRHLNSGGELRIVANAFLPYPDVLDETFGFHEVIAQTGRFKVYRAIMTRQAKKG.

Belongs to the methyltransferase superfamily. RsmC family. As to quaternary structure, monomer.

Its subcellular location is the cytoplasm. It catalyses the reaction guanosine(1207) in 16S rRNA + S-adenosyl-L-methionine = N(2)-methylguanosine(1207) in 16S rRNA + S-adenosyl-L-homocysteine + H(+). In terms of biological role, specifically methylates the guanine in position 1207 of 16S rRNA in the 30S particle. In Escherichia coli O1:K1 / APEC, this protein is Ribosomal RNA small subunit methyltransferase C.